The primary structure comprises 219 residues: 2-C-methyl-D-erythritol 4-phosphate cytidylyltransferase (219 aa).

This sequence belongs to the IspD/TarI cytidylyltransferase family. IspD subfamily.

The enzyme catalyses 2-C-methyl-D-erythritol 4-phosphate + CTP + H(+) = 4-CDP-2-C-methyl-D-erythritol + diphosphate. It functions in the pathway isoprenoid biosynthesis; isopentenyl diphosphate biosynthesis via DXP pathway; isopentenyl diphosphate from 1-deoxy-D-xylulose 5-phosphate: step 2/6. Its function is as follows. Catalyzes the formation of 4-diphosphocytidyl-2-C-methyl-D-erythritol from CTP and 2-C-methyl-D-erythritol 4-phosphate (MEP). This Endomicrobium trichonymphae protein is 2-C-methyl-D-erythritol 4-phosphate cytidylyltransferase.